A 178-amino-acid chain; its full sequence is tRNA (cytidine(56)-2'-O)-methyltransferase (178 aa).

Leu88 serves as a coordination point for S-adenosyl-L-methionine.

It belongs to the aTrm56 family. Homodimer.

The protein localises to the cytoplasm. The catalysed reaction is cytidine(56) in tRNA + S-adenosyl-L-methionine = 2'-O-methylcytidine(56) in tRNA + S-adenosyl-L-homocysteine + H(+). Specifically catalyzes the AdoMet-dependent 2'-O-ribose methylation of cytidine at position 56 in tRNAs. This Methanopyrus kandleri (strain AV19 / DSM 6324 / JCM 9639 / NBRC 100938) protein is tRNA (cytidine(56)-2'-O)-methyltransferase.